A 207-amino-acid polypeptide reads, in one-letter code: MAALVEPLGLERDVSRAVELLERLQRSGELPPQKLQALQRVLQSRFCSAIREVYEQLYDTLDITGSAEIRAHATAKATVAAFTASEGHAHPRVVELPKTDEGLGFNIMGGKEQNSPIYISRVIPGGVADRHGGLKRGDQLLSVNGVSVEGEQHEKAVELLKAAQGSVKLVVRYTPRVLEEMEARFEKMRSARRRQQHQSYSSLESRG.

Positions 1 to 13 match the Kinase interacting site motif; that stretch reads MAALVEPLGLERD. Positions 10 to 65 constitute an L27 domain; sequence LERDVSRAVELLERLQRSGELPPQKLQALQRVLQSRFCSAIREVYEQLYDTLDITG. One can recognise a PDZ domain in the interval 93–175; that stretch reads VVELPKTDEG…SVKLVVRYTP (83 aa). Positions 187 to 207 are disordered; it reads KMRSARRRQQHQSYSSLESRG. Polar residues predominate over residues 197-207; it reads HQSYSSLESRG.

This sequence belongs to the lin-7 family. In terms of assembly, forms a complex with CASK and CASKIN1. Component of the brain-specific heterotrimeric complex (LIN-10-LIN-2-LIN-7 complex) composed of at least APBA1, CASK, and LIN7, which associates with the motor protein KIF17 to transport vesicles along microtubules. Forms a heterotrimeric complex composed of MMP5, LIN7B and PATJ; the N-terminal L27 domain of PALS1 interacts with the L27 domain of PATJ and the C-terminal L27 domain of PALS1 interacts with the L27 domain of LIN7B. Forms a heterotrimeric complex with DLG1 and CASK via their L27 domains. Interacts with DLG4 and GRIN2B as well as CDH1 and CTNNB1, the channels KCNJ12/Kir2.2, KCNJ4/Kir2.3 and probably KCNJ2/Kir2.1 and SLC6A12/BGT-1 via its PDZ domain. The association of LIN7A with cadherin and beta-catenin is calcium-dependent, occurs at synaptic junctions and requires the actin cytoskeleton. Interacts with EGFR, ERBB2, ERBB3 and ERBB4 with both PDZ and KID domains. Associates with KIF17 via APBA1. Interacts with ASIC3. Interacts with TOPK. Interacts with RTKN. Interacts with APBA1. Interacts with MPP7. Interacts with DLG2. Interacts with DLG3.

The protein localises to the cell membrane. Its subcellular location is the basolateral cell membrane. It is found in the cell junction. It localises to the postsynaptic density membrane. The protein resides in the tight junction. Plays a role in establishing and maintaining the asymmetric distribution of channels and receptors at the plasma membrane of polarized cells. Forms membrane-associated multiprotein complexes that may regulate delivery and recycling of proteins to the correct membrane domains. The tripartite complex composed of LIN7 (LIN7A, LIN7B or LIN7C), CASK and APBA1 associates with the motor protein KIF17 to transport vesicles containing N-methyl-D-aspartate (NMDA) receptor subunit NR2B along microtubules. This complex may have the potential to couple synaptic vesicle exocytosis to cell adhesion in brain. Ensures the proper localization of GRIN2B (subunit 2B of the NMDA receptor) to neuronal postsynaptic density and may function in localizing synaptic vesicles at synapses where it is recruited by beta-catenin and cadherin. Required to localize Kir2 channels, GABA transporter (SLC6A12) and EGFR/ERBB1, ERBB2, ERBB3 and ERBB4 to the basolateral membrane of epithelial cells. May increase the amplitude of ASIC3 acid-evoked currents by stabilizing the channel at the cell surface. The polypeptide is Protein lin-7 homolog B (LIN7B) (Homo sapiens (Human)).